Consider the following 325-residue polypeptide: Diacylglycerol acyltransferase/mycolyltransferase Ag85B (325 aa).

The N-terminal stretch at 1 to 40 is a signal peptide; that stretch reads MTDVSGKIRAWGRRLLVGAAAAAALPGLVGLAGGAATAGA. 82 to 83 serves as a coordination point for substrate; that stretch reads LR. The segment at 98-108 is fibronectin-binding; sequence FEWYYQSGLSV. An intrachain disulfide couples C127 to C132. Residues S166 and D194 each contribute to the substrate site. S166 serves as the catalytic Nucleophile. E270 is an active-site residue. Substrate-binding positions include 272–275, K279, and 302–304; these read FVRS and HSW. H302 is an active-site residue.

Belongs to the mycobacterial A85 antigen family.

The protein localises to the secreted. It carries out the reaction 2 alpha,alpha'-trehalose 6-mycolate = alpha,alpha'-trehalose 6,6'-bismycolate + alpha,alpha-trehalose. The catalysed reaction is an acyl-CoA + a 1,2-diacyl-sn-glycerol = a triacyl-sn-glycerol + CoA. Functionally, the antigen 85 proteins (FbpA, FbpB, FbpC) are responsible for the high affinity of mycobacteria for fibronectin, a large adhesive glycoprotein, which facilitates the attachment of M.tuberculosis to murine alveolar macrophages (AMs). They also help to maintain the integrity of the cell wall by catalyzing the transfer of mycolic acids to cell wall arabinogalactan and through the synthesis of alpha,alpha-trehalose dimycolate (TDM, cord factor). They catalyze the transfer of a mycoloyl residue from one molecule of alpha,alpha-trehalose monomycolate (TMM) to another TMM, leading to the formation of TDM. The chain is Diacylglycerol acyltransferase/mycolyltransferase Ag85B (fbpB) from Mycobacterium kansasii.